The following is a 250-amino-acid chain: Small ribosomal subunit protein uS2 (250 aa).

This sequence belongs to the universal ribosomal protein uS2 family.

In Paraburkholderia phytofirmans (strain DSM 17436 / LMG 22146 / PsJN) (Burkholderia phytofirmans), this protein is Small ribosomal subunit protein uS2.